Reading from the N-terminus, the 416-residue chain is Glutamyl-tRNA reductase (416 aa).

Residues 50-53 (TCNR), S109, 114-116 (EPQ), and Q120 each bind substrate. C51 acts as the Nucleophile in catalysis. 189-194 (GAGEMI) lines the NADP(+) pocket.

The protein belongs to the glutamyl-tRNA reductase family. As to quaternary structure, homodimer.

The catalysed reaction is (S)-4-amino-5-oxopentanoate + tRNA(Glu) + NADP(+) = L-glutamyl-tRNA(Glu) + NADPH + H(+). It functions in the pathway porphyrin-containing compound metabolism; protoporphyrin-IX biosynthesis; 5-aminolevulinate from L-glutamyl-tRNA(Glu): step 1/2. Catalyzes the NADPH-dependent reduction of glutamyl-tRNA(Glu) to glutamate 1-semialdehyde (GSA). The sequence is that of Glutamyl-tRNA reductase from Vesicomyosocius okutanii subsp. Calyptogena okutanii (strain HA).